Consider the following 1146-residue polypeptide: Probable transport protein MmpL12 (1146 aa).

Helical transmembrane passes span 25–45, 206–226, 254–274, 298–318, 330–350, 382–402, 826–846, 850–870, 883–903, 928–948, and 949–969; these read LIVI…LPTL, VSVL…LVPL, AIVF…VFLI, IGKV…AMVF, AIAV…PAIL, TIHL…TLLI, FIVI…LRAL, IYLI…GTLV, LPGL…MLLI, VITS…GASI, and NTMA…TFLV.

The protein belongs to the resistance-nodulation-cell division (RND) (TC 2.A.6) family. MmpL subfamily.

The protein resides in the cell membrane. The sequence is that of Probable transport protein MmpL12 (mmpL12) from Mycobacterium tuberculosis (strain CDC 1551 / Oshkosh).